Consider the following 285-residue polypeptide: K88 fimbrial protein AB (285 aa).

A signal peptide spans 1–21 (MKKTLIALAIAASAASGMAHA).

This sequence belongs to the fimbrial K88 protein family. As to quaternary structure, K88 fimbria, 0.1-1 micrometer in length and 7 nanometers in diameter, is composed of about 100 identical subunits.

It is found in the fimbrium. In terms of biological role, K88 major fimbrial subunit. Fimbriae (also called pili), are polar filaments radiating from the surface of the bacterium to a length of 0.5-1.5 micrometers and numbering 100-300 per cell. They enable bacteria to colonize the epithelium of specific host organs. This is K88 fimbrial protein AB (faeG) from Escherichia coli.